A 125-amino-acid polypeptide reads, in one-letter code: Apolipoprotein C-IV (125 aa).

The signal sequence occupies residues 1–27; sequence MSLLRHSLQALPALCLCVLVLACIGAC.

It belongs to the apolipoprotein C4 family.

Its subcellular location is the secreted. May participate in lipoprotein metabolism. This chain is Apolipoprotein C-IV (APOC4), found in Ateles geoffroyi (Black-handed spider monkey).